The sequence spans 280 residues: 2-dehydro-3-deoxyphosphooctonate aldolase (280 aa).

This sequence belongs to the KdsA family.

Its subcellular location is the cytoplasm. The catalysed reaction is D-arabinose 5-phosphate + phosphoenolpyruvate + H2O = 3-deoxy-alpha-D-manno-2-octulosonate-8-phosphate + phosphate. The protein operates within carbohydrate biosynthesis; 3-deoxy-D-manno-octulosonate biosynthesis; 3-deoxy-D-manno-octulosonate from D-ribulose 5-phosphate: step 2/3. Its pathway is bacterial outer membrane biogenesis; lipopolysaccharide biosynthesis. The chain is 2-dehydro-3-deoxyphosphooctonate aldolase from Coxiella burnetii (strain Dugway 5J108-111).